The chain runs to 187 residues: MGIDIERHHVRKSQRSKPASENVYLKLLVKLYRFLARRTDSRFNKAILKRLFQSKTNRPPISISKIAALTSRKSASLEGKTTVIVGTVTDDERLLTVPKLSVAALRFTKSARARILKAGGEVLTLDQLALRAPTGSNTVLLRGKKHAREAYRHFGFGPHKHKAPYVRSEGRKFERARGRRKSRAFKV.

At Thr-134 the chain carries Phosphothreonine. Ser-136 bears the Phosphoserine mark.

This sequence belongs to the eukaryotic ribosomal protein eL18 family. Component of the large ribosomal subunit (LSU). Mature yeast ribosomes consist of a small (40S) and a large (60S) subunit. The 40S small subunit contains 1 molecule of ribosomal RNA (18S rRNA) and at least 33 different proteins. The large 60S subunit contains 3 rRNA molecules (25S, 5.8S and 5S rRNA) and at least 46 different proteins. eL18 interacts with NAP1.

It is found in the cytoplasm. Its function is as follows. Component of the ribosome, a large ribonucleoprotein complex responsible for the synthesis of proteins in the cell. The small ribosomal subunit (SSU) binds messenger RNAs (mRNAs) and translates the encoded message by selecting cognate aminoacyl-transfer RNA (tRNA) molecules. The large subunit (LSU) contains the ribosomal catalytic site termed the peptidyl transferase center (PTC), which catalyzes the formation of peptide bonds, thereby polymerizing the amino acids delivered by tRNAs into a polypeptide chain. The nascent polypeptides leave the ribosome through a tunnel in the LSU and interact with protein factors that function in enzymatic processing, targeting, and the membrane insertion of nascent chains at the exit of the ribosomal tunnel. The sequence is that of Large ribosomal subunit protein eL18B (rpl1802) from Schizosaccharomyces pombe (strain 972 / ATCC 24843) (Fission yeast).